Reading from the N-terminus, the 401-residue chain is MAFLNLFFCLVFISPLMAMPPVLQGRKSISPDSILKDTSTDIGAREFQGRKFPNFMMQLYQNIIRGRDNDLSNLEHPTLQESDTVQSFIAKSYTTVGNRWTLFFDMSSISRSNELKLAELRICLPSFRKSHSVTVDIYHTNDGKEKLFMGSFKTKLSSALDSDCKVFNLTILLQNFLTRGKRLIKDEYIQAKGLHLKDLEKSATEKDTENVDTMKQHQYHVSDFAAERIMLVVFAKEQSHAKPDPPSLGQKLFPSKYGIDDNANKVNGFRRLRRNKKEKTQIHVSTVPPKPIEEIKPECKKVDMFVDFQKIGWGSWIIYPKAYNAYRCESTCAVPQNETENATNHSYIKSLLPLSDMERKECPSCVPMKMMSMSMLYYENEDFILRHHEEMIVEECGFKDM.

The N-terminal stretch at 1–18 is a signal peptide; that stretch reads MAFLNLFFCLVFISPLMA. Positions 19–274 are excised as a propeptide; the sequence is MPPVLQGRKS…KVNGFRRLRR (256 aa). Residues Asn168, Asn337, Asn341, and Asn344 are each glycosylated (N-linked (GlcNAc...) asparagine). Cystine bridges form between Cys299/Cys365 and Cys328/Cys396.

It belongs to the TGF-beta family. As to quaternary structure, monomer. The propeptide region interacts with bmp4 in a non-covalent manner. Expressed in the epithelial layer of the Spemann organizer during gastrulation.

Its subcellular location is the secreted. In terms of biological role, exhibits mesoderm-dorsalizing activity and neural-inducing activity, but lacks mesoderm-inducing activity. Regulates the expression of specific mesodermal and neural genes. Induces convergent extension movements at the embryonic midline by activating the fgf signaling pathway to induce t/bra expression in the organizer region. Acts with wnt11 to induce Spemann organizer cells and induce axis formation. The unprocessed protein antagonizes bmp-signaling. This Xenopus laevis (African clawed frog) protein is Nodal homolog 3-A (nodal3-a).